Here is a 301-residue protein sequence, read N- to C-terminus: m7GpppX diphosphatase (301 aa).

Substrate is bound by residues Glu-154, Lys-176, and His-237–His-248. The short motif at His-244–His-248 is the Histidine triad motif element. Catalysis depends on His-246, which acts as the Nucleophile.

This sequence belongs to the HIT family.

Its subcellular location is the nucleus. It carries out the reaction a 5'-end (N(7)-methyl 5'-triphosphoguanosine)-ribonucleoside in mRNA + H2O = N(7)-methyl-GMP + a 5'-end diphospho-ribonucleoside in mRNA + 2 H(+). The catalysed reaction is a 5'-end (N(2),N(2),N(7)-trimethyl 5'-triphosphoguanosine)-ribonucleoside in mRNA + H2O = (N(2),N(2),N(7))-trimethyl-GMP + a 5'-end diphospho-ribonucleoside in mRNA + 2 H(+). With respect to regulation, the hydrolytic product 7-methylguanosine diphosphate (m7GDP) efficiently inhibits the decapping scavenger activity and acts as a competitive inhibitor in vitro. Its function is as follows. Decapping scavenger enzyme that catalyzes the cleavage of a residual cap structure following the degradation of mRNAs of the 3'-&gt;5' exosome-mediated mRNA decay pathway. Hydrolyzes cap analog structures like 7-methylguanosine nucleoside triphosphate (m7GpppG) and tri-methyl guanosine nucleoside triphosphate (m3(2,2,7)GpppG) with up to 2 nucleotide substrates (small capped oligoribonucleotides) and specifically releases 5'-phosphorylated RNA fragments and 7-methylguanosine monophosphate (m7GMP). Does not hydrolyze unmethylated cap analog (GpppG) and shows no decapping activity on intact m7GpppG-capped mRNA molecules. Does not hydrolyze 7-methylguanosine diphosphate (m7GDP) and tri-methylguanosine diphosphate (m3(2,2,7)GDP) to m(7)GMP and m3(2,2,7)GMP, respectively. May also play a role in the 5'-&gt;3 mRNA decay pathway; m7GDP, the downstream product released by the 5'-&gt;3' mRNA mediated decapping activity, may be also converted by dcs-1 to m7GMP. Binds to m7GpppG and strongly to m7GDP. In Ascaris suum (Pig roundworm), this protein is m7GpppX diphosphatase.